The following is a 270-amino-acid chain: MFGLKVKDATVDSSKQSTESLKGEESSSSSTTSSTSTTQRGGSSGDTKVKALQVAVKKKSDSEDNGQIELETNNLANAPIKRGSNNNQQVQLKADDFGTSPSSSESGQSGTPTPWTPWLATEQIHKDLPKWSASILILYDAPYARNRTAIDRVDHLDPKVMTANYPPSWRTPKWNHHGLWDWKARDVLVQTTGFFNPRRHPDWFDQGQAVAENTQTGFDTDDTDNKKQGFRKQGEQSPAPIALPFEAYFANIGNLTWFGQALLVFGICLS.

Residues 1–10 (MFGLKVKDAT) show a composition bias toward basic and acidic residues. Disordered stretches follow at residues 1–115 (MFGL…PTPW) and 215–236 (QTGFDTDDTDNKKQGFRKQGEQ). Low complexity-rich tracts occupy residues 26–41 (SSSSSTTSSTSTTQRG) and 98–113 (GTSPSSSESGQSGTPT).

Belongs to the adhesin P1 family.

This is an uncharacterized protein from Mycoplasma pneumoniae (strain ATCC 29342 / M129 / Subtype 1) (Mycoplasmoides pneumoniae).